We begin with the raw amino-acid sequence, 159 residues long: Endoribonuclease YbeY (159 aa).

Zn(2+) contacts are provided by His125, His129, and His135.

It belongs to the endoribonuclease YbeY family. It depends on Zn(2+) as a cofactor.

Its subcellular location is the cytoplasm. Its function is as follows. Single strand-specific metallo-endoribonuclease involved in late-stage 70S ribosome quality control and in maturation of the 3' terminus of the 16S rRNA. In Lactiplantibacillus plantarum (strain ATCC BAA-793 / NCIMB 8826 / WCFS1) (Lactobacillus plantarum), this protein is Endoribonuclease YbeY.